Reading from the N-terminus, the 582-residue chain is 5-aminolevulinate synthase, erythroid-specific, mitochondrial (582 aa).

The N-terminal 44 residues, 1 to 44 (MLLQRCPVLIRSPTAILGKMIKTHQFLIGIGRCPILATQGTTCS), are a transit peptide targeting the mitochondrion. Arg158 contributes to the succinyl-CoA binding site. Positions 253 and 254 each coordinate pyridoxal 5'-phosphate. Residues Ser275 and Lys294 each coordinate succinyl-CoA. 3 residues coordinate pyridoxal 5'-phosphate: Ser327, His355, and Thr383. The active site involves Lys386. Position 386 is an N6-(pyridoxal phosphate)lysine (Lys386). Residues Thr415 and Thr416 each contribute to the pyridoxal 5'-phosphate site. A succinyl-CoA-binding site is contributed by Thr503.

It belongs to the class-II pyridoxal-phosphate-dependent aminotransferase family. As to quaternary structure, homodimer. Requires pyridoxal 5'-phosphate as cofactor.

It is found in the mitochondrion inner membrane. The enzyme catalyses succinyl-CoA + glycine + H(+) = 5-aminolevulinate + CO2 + CoA. Its pathway is porphyrin-containing compound metabolism; protoporphyrin-IX biosynthesis; 5-aminolevulinate from glycine: step 1/1. Its function is as follows. Catalyzes the pyridoxal 5'-phosphate (PLP)-dependent condensation of succinyl-CoA and glycine to form aminolevulinic acid (ALA), with CoA and CO2 as by-products. Contributes significantly to heme formation during erythropoiesis. The protein is 5-aminolevulinate synthase, erythroid-specific, mitochondrial (ALAS2) of Delphinapterus leucas (Beluga whale).